The sequence spans 212 residues: Ribonuclease HII (212 aa).

The RNase H type-2 domain occupies Gln-24 to Glu-212. 3 residues coordinate a divalent metal cation: Asp-30, Glu-31, and Asp-122.

This sequence belongs to the RNase HII family. The cofactor is Mn(2+). It depends on Mg(2+) as a cofactor.

The protein localises to the cytoplasm. The catalysed reaction is Endonucleolytic cleavage to 5'-phosphomonoester.. In terms of biological role, endonuclease that specifically degrades the RNA of RNA-DNA hybrids. This is Ribonuclease HII from Vibrio campbellii (strain ATCC BAA-1116).